Here is a 392-residue protein sequence, read N- to C-terminus: Cobalt-precorrin-5B C(1)-methyltransferase (392 aa).

Belongs to the CbiD family.

The catalysed reaction is Co-precorrin-5B + S-adenosyl-L-methionine = Co-precorrin-6A + S-adenosyl-L-homocysteine. It functions in the pathway cofactor biosynthesis; adenosylcobalamin biosynthesis; cob(II)yrinate a,c-diamide from sirohydrochlorin (anaerobic route): step 6/10. Functionally, catalyzes the methylation of C-1 in cobalt-precorrin-5B to form cobalt-precorrin-6A. This Pelobacter propionicus (strain DSM 2379 / NBRC 103807 / OttBd1) protein is Cobalt-precorrin-5B C(1)-methyltransferase.